Here is a 335-residue protein sequence, read N- to C-terminus: Tetraacyldisaccharide 4'-kinase (335 aa).

58–65 (TVGGSGKT) lines the ATP pocket.

It belongs to the LpxK family.

The catalysed reaction is a lipid A disaccharide + ATP = a lipid IVA + ADP + H(+). It functions in the pathway glycolipid biosynthesis; lipid IV(A) biosynthesis; lipid IV(A) from (3R)-3-hydroxytetradecanoyl-[acyl-carrier-protein] and UDP-N-acetyl-alpha-D-glucosamine: step 6/6. Its function is as follows. Transfers the gamma-phosphate of ATP to the 4'-position of a tetraacyldisaccharide 1-phosphate intermediate (termed DS-1-P) to form tetraacyldisaccharide 1,4'-bis-phosphate (lipid IVA). The polypeptide is Tetraacyldisaccharide 4'-kinase (Shewanella sp. (strain MR-4)).